We begin with the raw amino-acid sequence, 376 residues long: MSNKSVLLIAGEPSGDLLGAHLAQSLKSLEPNLKLAGMGGKRMREAGVEVFINADKLAVVGLLEILRQFRDIRHAMQTLKRYFKKTPPDLVVFIDYPGFNLHMAKQAKKAGIKVLYYVSPQIWAWRYGRIKKIKKYVDHMAVLFDFEEKLYQKENVPVSFVGHPLANAPTPSLSRNEICKQFNLDPDKPIVALFPGSREQEINKLLPMMVQAGKLIQTQIPTVQFILPLALNLALDKIRPFLSPEIKVIQNDISYVLAIAHAAVAASGTVTLEIALQQVPLVIIYKVAPLTFWLGKKLIRLSFIGLCNLVSPEPVAVELLQQDATPQAIADEVFQLLNNHNYRQSIIGKLGHLRPQLDRGNAAQNVAKVVHNLIFS.

Belongs to the LpxB family.

It catalyses the reaction a lipid X + a UDP-2-N,3-O-bis[(3R)-3-hydroxyacyl]-alpha-D-glucosamine = a lipid A disaccharide + UDP + H(+). It functions in the pathway bacterial outer membrane biogenesis; LPS lipid A biosynthesis. In terms of biological role, condensation of UDP-2,3-diacylglucosamine and 2,3-diacylglucosamine-1-phosphate to form lipid A disaccharide, a precursor of lipid A, a phosphorylated glycolipid that anchors the lipopolysaccharide to the outer membrane of the cell. The polypeptide is Lipid-A-disaccharide synthase (Coxiella burnetii (strain RSA 331 / Henzerling II)).